Reading from the N-terminus, the 112-residue chain is Large ribosomal subunit protein eL30 (112 aa).

The protein belongs to the eukaryotic ribosomal protein eL30 family.

The sequence is that of Large ribosomal subunit protein eL30 (rpl30) from Dictyostelium discoideum (Social amoeba).